Reading from the N-terminus, the 1189-residue chain is Ras-specific guanine nucleotide-releasing factor 2 (1189 aa).

A PH 1 domain is found at E22–Y133. Residues K158–R193 adopt a coiled-coil conformation. The IQ domain occupies D205 to C234. The DH domain maps to K243–E429. The PH 2 domain maps to P470–D588. One can recognise an N-terminal Ras-GEF domain in the interval K635 to G755. A disordered region spans residues V713–P738. S725 and S726 each carry phosphoserine. S736 is modified (phosphoserine; by CDK5). A regulates proteasomal degradation region spans residues K743–N751. 2 positions are modified to phosphoserine: S745 and S749. Positions L757 to P817 are disordered. Positions S762–A776 are enriched in low complexity. Phosphoserine occurs at positions 801, 805, and 924. Residues S954 to R1186 form the Ras-GEF domain. The responsible of the affinity for farnesylated versus geranylgeranylated Ras stretch occupies residues A1051–K1080.

In terms of assembly, homooligomer and heterooligomer with RASGRF1. Interacts with Ras and RAC1. Interacts in a calcium-dependent manner with calmodulin. Interacts with EPB49 and probably CDK5R1. Interacts with the AMPA receptor through GRIA1. Interacts with microtubules. Phosphorylated by CDK5; down-regulates RASGRF2-mediated RAC1 activation. Post-translationally, ubiquitinated upon interaction with Ras. Ubiquitination leads to degradation through the 26S proteasome. In terms of tissue distribution, expressed in brain in the nucleus of the solitary tract. Not observed in the hippocampus (at protein level).

It localises to the cytoplasm. The protein localises to the cell membrane. The protein resides in the endoplasmic reticulum membrane. Functions as a calcium-regulated nucleotide exchange factor activating both Ras and RAC1 through the exchange of bound GDP for GTP. Preferentially activates HRAS in vivo compared to RRAS based on their different types of prenylation. Functions in synaptic plasticity by contributing to the induction of long term potentiation. The protein is Ras-specific guanine nucleotide-releasing factor 2 (Rasgrf2) of Mus musculus (Mouse).